We begin with the raw amino-acid sequence, 210 residues long: Histidine biosynthesis bifunctional protein HisIE (210 aa).

The phosphoribosyl-AMP cyclohydrolase stretch occupies residues methionine 1–serine 106. The segment at valine 107 to tryptophan 210 is phosphoribosyl-ATP pyrophosphohydrolase.

The protein in the N-terminal section; belongs to the PRA-CH family. In the C-terminal section; belongs to the PRA-PH family.

It is found in the cytoplasm. The catalysed reaction is 1-(5-phospho-beta-D-ribosyl)-ATP + H2O = 1-(5-phospho-beta-D-ribosyl)-5'-AMP + diphosphate + H(+). It catalyses the reaction 1-(5-phospho-beta-D-ribosyl)-5'-AMP + H2O = 1-(5-phospho-beta-D-ribosyl)-5-[(5-phospho-beta-D-ribosylamino)methylideneamino]imidazole-4-carboxamide. Its pathway is amino-acid biosynthesis; L-histidine biosynthesis; L-histidine from 5-phospho-alpha-D-ribose 1-diphosphate: step 2/9. The protein operates within amino-acid biosynthesis; L-histidine biosynthesis; L-histidine from 5-phospho-alpha-D-ribose 1-diphosphate: step 3/9. In Staphylococcus aureus (strain Mu50 / ATCC 700699), this protein is Histidine biosynthesis bifunctional protein HisIE (hisI).